Consider the following 186-residue polypeptide: Periplasmic nitrate reductase, electron transfer subunit (186 aa).

An N-terminal signal peptide occupies residues 1–20; that stretch reads MKTSKLNFLTLVASTGLALA. Residues H87, C102, C105, H106, H123, C144, C147, and H148 each contribute to the heme c site.

This sequence belongs to the NapB family. In terms of assembly, component of the periplasmic nitrate reductase NapAB complex composed of NapA and NapB. In terms of processing, binds 2 heme C groups per subunit.

It is found in the periplasm. Functionally, electron transfer subunit of the periplasmic nitrate reductase complex NapAB. Transfers electrons to NapA subunit, thus allowing electron flow between membrane and periplasm. Essential for periplasmic nitrate reduction with nitrate as the terminal electron acceptor. This chain is Periplasmic nitrate reductase, electron transfer subunit, found in Wolinella succinogenes (strain ATCC 29543 / DSM 1740 / CCUG 13145 / JCM 31913 / LMG 7466 / NCTC 11488 / FDC 602W) (Vibrio succinogenes).